A 156-amino-acid polypeptide reads, in one-letter code: Ribosomal RNA large subunit methyltransferase H (156 aa).

S-adenosyl-L-methionine is bound by residues L73, G104, and 123–128; that span reads LSSLTL.

This sequence belongs to the RNA methyltransferase RlmH family. As to quaternary structure, homodimer.

Its subcellular location is the cytoplasm. The enzyme catalyses pseudouridine(1915) in 23S rRNA + S-adenosyl-L-methionine = N(3)-methylpseudouridine(1915) in 23S rRNA + S-adenosyl-L-homocysteine + H(+). Functionally, specifically methylates the pseudouridine at position 1915 (m3Psi1915) in 23S rRNA. This is Ribosomal RNA large subunit methyltransferase H from Ralstonia pickettii (strain 12J).